The following is a 133-amino-acid chain: MIYILLYMVLLLLLLLLLLLLLLLLLLLQLYYFVFDSYTFSHITCSFSILFLVSFSIGTFFSSIGARLSSFSASMRPTRAISLPRSNCALQMNSLLMRLKTLVMNRLVFLSKPFRLAMRHSPSTLIITTLLFK.

Helical transmembrane passes span 8 to 28 (MVLL…LLLL) and 46 to 66 (SFSI…SIGA).

It localises to the membrane. This is an uncharacterized protein from Saccharomyces cerevisiae (strain ATCC 204508 / S288c) (Baker's yeast).